A 252-amino-acid polypeptide reads, in one-letter code: Thiamine thiazole synthase (252 aa).

NAD(+) is bound by residues S35, 54 to 55 (EK), G62, V126, and 152 to 154 (HVD). The Fe cation site is built by D154 and H169. M217 lines the NAD(+) pocket. R227 is a binding site for glycine.

It belongs to the THI4 family. In terms of assembly, homooctamer; tetramer of dimers. Fe(2+) is required as a cofactor.

The enzyme catalyses hydrogen sulfide + glycine + NAD(+) = ADP-5-ethyl-4-methylthiazole-2-carboxylate + nicotinamide + 3 H2O + H(+). Its pathway is cofactor biosynthesis; thiamine diphosphate biosynthesis. Functionally, involved in the biosynthesis of the thiazole moiety of thiamine. Catalyzes the conversion of NAD and glycine to adenosine diphosphate 5-(2-hydroxyethyl)-4-methylthiazole-2-carboxylate (ADT), an adenylated thiazole intermediate, using free sulfide as a source of sulfur. The chain is Thiamine thiazole synthase from Pyrococcus horikoshii (strain ATCC 700860 / DSM 12428 / JCM 9974 / NBRC 100139 / OT-3).